A 459-amino-acid polypeptide reads, in one-letter code: Ribulose bisphosphate carboxylase large chain (459 aa).

The residue at position 4 (Lys-4) is an N6,N6,N6-trimethyllysine. Residues Asn-113 and Thr-163 each coordinate substrate. The active-site Proton acceptor is the Lys-165. Lys-167 contacts substrate. 3 residues coordinate Mg(2+): Lys-191, Asp-193, and Glu-194. Position 191 is an N6-carboxylysine (Lys-191). The active-site Proton acceptor is the His-284. The substrate site is built by Arg-285, His-317, and Ser-369.

The protein belongs to the RuBisCO large chain family. Type I subfamily. Heterohexadecamer of 8 large chains and 8 small chains; disulfide-linked. The disulfide link is formed within the large subunit homodimers. Mg(2+) is required as a cofactor. In terms of processing, the disulfide bond which can form in the large chain dimeric partners within the hexadecamer appears to be associated with oxidative stress and protein turnover.

It localises to the plastid. The protein resides in the chloroplast. It catalyses the reaction 2 (2R)-3-phosphoglycerate + 2 H(+) = D-ribulose 1,5-bisphosphate + CO2 + H2O. The catalysed reaction is D-ribulose 1,5-bisphosphate + O2 = 2-phosphoglycolate + (2R)-3-phosphoglycerate + 2 H(+). Functionally, ruBisCO catalyzes two reactions: the carboxylation of D-ribulose 1,5-bisphosphate, the primary event in carbon dioxide fixation, as well as the oxidative fragmentation of the pentose substrate in the photorespiration process. Both reactions occur simultaneously and in competition at the same active site. In Micranthes integrifolia (Wholeleaf saxifrage), this protein is Ribulose bisphosphate carboxylase large chain.